The sequence spans 200 residues: Holliday junction resolvase RecU (200 aa).

The interval 1-24 (MTIRYPNGKRYDQASQPHKTPIKK) is disordered. Mg(2+)-binding residues include threonine 85, aspartate 87, glutamate 100, and glutamine 119.

This sequence belongs to the RecU family. The cofactor is Mg(2+).

Its subcellular location is the cytoplasm. The enzyme catalyses Endonucleolytic cleavage at a junction such as a reciprocal single-stranded crossover between two homologous DNA duplexes (Holliday junction).. Its function is as follows. Endonuclease that resolves Holliday junction intermediates in genetic recombination. Cleaves mobile four-strand junctions by introducing symmetrical nicks in paired strands. Promotes annealing of linear ssDNA with homologous dsDNA. Required for DNA repair, homologous recombination and chromosome segregation. This is Holliday junction resolvase RecU from Bacillus mycoides (strain KBAB4) (Bacillus weihenstephanensis).